The primary structure comprises 261 residues: Small ribosomal subunit protein eS4 (261 aa).

The S4 RNA-binding domain occupies 42-100 (LPLILILRNRLKYALTYREVVSILMQRHILVDGKIHFCIRLSDVVSIPKTNENFRLLYD).

The protein belongs to the eukaryotic ribosomal protein eS4 family.

The protein localises to the cytoplasm. This Prunus armeniaca (Apricot) protein is Small ribosomal subunit protein eS4 (RPS4).